The primary structure comprises 156 residues: ATP synthase subunit b (156 aa).

The chain crosses the membrane as a helical span at residues 7-27 (LFAQMIVFFVLWWVVARFVWP).

The protein belongs to the ATPase B chain family. In terms of assembly, F-type ATPases have 2 components, F(1) - the catalytic core - and F(0) - the membrane proton channel. F(1) has five subunits: alpha(3), beta(3), gamma(1), delta(1), epsilon(1). F(0) has three main subunits: a(1), b(2) and c(10-14). The alpha and beta chains form an alternating ring which encloses part of the gamma chain. F(1) is attached to F(0) by a central stalk formed by the gamma and epsilon chains, while a peripheral stalk is formed by the delta and b chains.

It is found in the cell membrane. Its function is as follows. F(1)F(0) ATP synthase produces ATP from ADP in the presence of a proton or sodium gradient. F-type ATPases consist of two structural domains, F(1) containing the extramembraneous catalytic core and F(0) containing the membrane proton channel, linked together by a central stalk and a peripheral stalk. During catalysis, ATP synthesis in the catalytic domain of F(1) is coupled via a rotary mechanism of the central stalk subunits to proton translocation. Functionally, component of the F(0) channel, it forms part of the peripheral stalk, linking F(1) to F(0). The protein is ATP synthase subunit b of Polynucleobacter asymbioticus (strain DSM 18221 / CIP 109841 / QLW-P1DMWA-1) (Polynucleobacter necessarius subsp. asymbioticus).